Consider the following 579-residue polypeptide: MQDFWQAAAAQLERELTPQQFKTWIKPLAPVAFDEEAHALRIAAPNRFKLDWVKSQFSGRITALACEYWETQVSVHFVLDPAASGRAAAYTQQAMQQGQDAPAAMGTAMGAGHAPYPGMAGMAGGQSYGPAGAQVPGAHPNQMAGYPDYPSQSNGAPAGYGGAAGGQTPYSQSQQSAQGRGAAPTGHPLQGNSAAHLPDMGEIDVAQMDPAEASARSYRVPSPQPAAPAGAQQQSDTVHERSRLNPILTFDNFVTGKANQLARAAAIQVANNPGKSYNPLYLYGGVGLGKTHLIHAIGNFMLMENPRARIRYIHAEQYVSDVVKAYQRKAFDEFKRYYHSLDLLLIDDIQFFSGKNRTQEEFFYAFEALIANRAQVIITSDTYPKEITGIDDRLISRFDSGLTVAIEPPELEMRVAILMKKAAAENVSVPEEVAFFVAKHLRSNVRELEGALRKILAFSNFHGKDITIDVTREALKDLLTVQNRQISVENIQKTCADFYNIKVADMYSKKRPANIARPRQIAMYLAKELTQKSLPEIGELFGGRDHTTVLHAVRKIAEERSKDAQLNHELHVLEQTLKG.

Residues 1 to 71 (MQDFWQAAAA…TALACEYWET (71 aa)) form a domain I, interacts with DnaA modulators region. Residues 71 to 242 (TQVSVHFVLD…QQSDTVHERS (172 aa)) form a domain II region. Disordered stretches follow at residues 131-196 (AGAQ…SAAH) and 212-240 (EASA…TVHE). The span at 171–183 (SQSQQSAQGRGAA) shows a compositional bias: low complexity. The domain III, AAA+ region stretch occupies residues 243-459 (RLNPILTFDN…GALRKILAFS (217 aa)). Residues Gly287, Gly289, Lys290, and Thr291 each coordinate ATP. The domain IV, binds dsDNA stretch occupies residues 460–579 (NFHGKDITID…LHVLEQTLKG (120 aa)).

It belongs to the DnaA family. As to quaternary structure, oligomerizes as a right-handed, spiral filament on DNA at oriC.

It localises to the cytoplasm. In terms of biological role, plays an essential role in the initiation and regulation of chromosomal replication. ATP-DnaA binds to the origin of replication (oriC) to initiate formation of the DNA replication initiation complex once per cell cycle. Binds the DnaA box (a 9 base pair repeat at the origin) and separates the double-stranded (ds)DNA. Forms a right-handed helical filament on oriC DNA; dsDNA binds to the exterior of the filament while single-stranded (ss)DNA is stabiized in the filament's interior. The ATP-DnaA-oriC complex binds and stabilizes one strand of the AT-rich DNA unwinding element (DUE), permitting loading of DNA polymerase. After initiation quickly degrades to an ADP-DnaA complex that is not apt for DNA replication. Binds acidic phospholipids. The protein is Chromosomal replication initiator protein DnaA of Cupriavidus metallidurans (strain ATCC 43123 / DSM 2839 / NBRC 102507 / CH34) (Ralstonia metallidurans).